Consider the following 688-residue polypeptide: MNPLALLVEILIIIEVTTKNSEAERYNRKQKEVNVTTQVSVSKVKQFLSHLLEQGKANKIANKRENPLEKKKHQHKLKIKGIQNKNLLKRNQNYFKKPAKKSITDKGDELFKMGNKILQESKSQKQKTEAYTFFTRAADMGNLKAMEKMADALLFGSFGMQNITAAIQLYESLAKEGSYKAQNALGFLSSYGIGMEYDQAKALIYYTFGSAGGSMMSQMILGYRYLSGINVLQNCEVALNHYKKVADYIADKLEKSEGIPVEKVRLTERPENLSSNSEILDWDIYQYYKFLAERGDVQIQVSLGQLHLIGRKGLDQDYSKALYYFLKAAKAGSANAMAFIGKMYLEGNAAAPQNNATAFKYFSMAASKGNAIGLHGLGLLYFHGKGVPVNYGEALKYFQKAAEKGWPNAQFHLGFMYYSGSGVWKDYKLAFKYFYLASQSGQPLAIYYLAEMYATGTGVLRSCRTAVEPYKGVCELGHWAEKFLTAYFAYKDGDVDSSLIQYALLAEMGYEVAQSNSAFILESKKAKILGKEKMYPMALLLWNRAAIQGNAFARVKIGDYHYYGYGTKKDYETAATHYSIAADKHHSAQAMFNLAYMYEHGLGIAQDIHLARRLYDMAAQTSPDAHIPVFFALMKLETMHFLQDILFFNFTTKWKWLKLDSTIGPYWDLLVIGLIVVVLIFLLRNHHR.

Positions 1 to 18 are cleaved as a signal peptide; that stretch reads MNPLALLVEILIIIEVTT. Residues 19–662 lie on the Extracellular side of the membrane; it reads KNSEAERYNR…KWKWLKLDST (644 aa). An N-linked (GlcNAc...) asparagine glycan is attached at Asn34. Sel1-like repeat units lie at residues 107 to 142, 143 to 178, 179 to 214, 215 to 250, 297 to 333, 334 to 370, 371 to 406, 407 to 442, 443 to 478, 551 to 586, and 588 to 623; these read GDEL…DMGN, LKAM…KEGS, YKAQ…AGGS, MMSQ…DYIA, VQIQ…KAGS, ANAM…SKGN, AIGL…EKGW, PNAQ…QSGQ, PLAI…ELGH, AFAR…DKHH, and AQAM…QTSP. The N-linked (GlcNAc...) asparagine glycan is linked to Asn162. A helical membrane pass occupies residues 663 to 683; it reads IGPYWDLLVIGLIVVVLIFLL. Over 684–688 the chain is Cytoplasmic; sequence RNHHR.

This sequence belongs to the sel-1 family.

Its subcellular location is the membrane. The protein resides in the cell projection. It is found in the cilium. The protein localises to the nucleus speckle. In Rattus norvegicus (Rat), this protein is Protein sel-1 homolog 2 (Sel1l2).